Here is a 103-residue protein sequence, read N- to C-terminus: uncharacterized protein (103 aa).

This is an uncharacterized protein from Homo sapiens (Human).